Consider the following 345-residue polypeptide: Phenylalanine--tRNA ligase alpha subunit (345 aa).

E266 is a Mg(2+) binding site.

The protein belongs to the class-II aminoacyl-tRNA synthetase family. Phe-tRNA synthetase alpha subunit type 1 subfamily. As to quaternary structure, tetramer of two alpha and two beta subunits. Mg(2+) serves as cofactor.

It localises to the cytoplasm. The enzyme catalyses tRNA(Phe) + L-phenylalanine + ATP = L-phenylalanyl-tRNA(Phe) + AMP + diphosphate + H(+). The chain is Phenylalanine--tRNA ligase alpha subunit from Methylibium petroleiphilum (strain ATCC BAA-1232 / LMG 22953 / PM1).